Consider the following 646-residue polypeptide: Preterminal protein (646 aa).

The Nuclear localization signal motif lies at 357 to 366 (RLPVRRRRRR). The residue at position 555 (Ser555) is an O-(5'-phospho-DNA)-serine. The disordered stretch occupies residues 619–646 (LHADVPLPPLQANPHPPLPPDARPQRTM). Residues 624–640 (PLPPLQANPHPPLPPDA) are compositionally biased toward pro residues.

The protein belongs to the adenoviridae terminal protein family. As to quaternary structure, heterodimer with the polymerase; this heterodimer binds to bp 9 to 18 of the genome. Interacts with host POU2F1; POU2F1 binds to the auxiliary sequences in the inverted terminal repeats and tethers the pTP-POL heterodimer to the origin DNA thereby participating in the assembly of the pre-initiation complex (POL-TP-DBP-NFIA-POU2F1). In terms of processing, preterminal protein is used to replicate viral genome, upon genomic encapsidation it is processed first into iTP and finally into TP by adenovirus protease.

The protein localises to the host nucleus matrix. Functionally, protein covalently bound to the viral DNA that acts as a primer for viral genomic replication by DNA strand displacement. Assembles on the viral origin of replication in an initiation complex with viral polymerase, DBP, host NFIA and host POU2F1/OCT1. During initiation, the polymerase covalently couples the first dCTP with Ser-580 of pTP. The terminal protein stimulates the template activity over 20 fold compared to protein-free templates. Neo-synthesized viral genomes are linked to two preterminal proteins, one for each 5' end. These new genomes are encapsidated in the nucleus, and during capsid maturation by viral protease, preterminal protein is first cleaved into intermediary (iTP), then into mature TP. May play a role in host nuclear matrix localization of genomic DNA. In Homo sapiens (Human), this protein is Preterminal protein.